The following is a 263-amino-acid chain: Hemophilin (263 aa).

A signal peptide spans 1-20 (MKISQLFLGLVACSTAFAYA). The heme b site is built by H42, Y58, S104, and H105.

As to quaternary structure, monomer in solution. Interacts with host hemoglobin.

The protein localises to the secreted. Part of a high affinity heme acquisition system. Functions as a hemophore that acquires heme from human hemoglobin and delivers the heme to its cognate receptor, HphR, facilitating transport of heme across the bacterial outer membrane. Apo HphA interacts specifically with human hemoglobin and steals heme through a passive process probably due to its high affinity for heme. It can also acquire heme complexed to human serum albumin. Plays a supporting role for full virulence, acting as an accessory factor that enhances the process of heme uptake. This chain is Hemophilin, found in Acinetobacter baumannii.